The sequence spans 143 residues: Actin-depolymerizing factor 5 (143 aa).

Positions 11–143 (GMNVKEECQR…GYDVIRGRAQ (133 aa)) constitute an ADF-H domain.

It belongs to the actin-binding proteins ADF family.

Its function is as follows. Actin-depolymerizing protein. Severs actin filaments (F-actin) and binds to actin monomers. The chain is Actin-depolymerizing factor 5 (ADF5) from Oryza sativa subsp. japonica (Rice).